The sequence spans 674 residues: DNA ligase (674 aa).

NAD(+)-binding positions include Asp-34–Asp-38, Ser-83–Leu-84, and Glu-117. Lys-119 functions as the N6-AMP-lysine intermediate in the catalytic mechanism. NAD(+) is bound by residues Arg-140, Glu-184, Lys-297, and Lys-321. Residues Cys-415, Cys-418, Cys-433, and Cys-439 each contribute to the Zn(2+) site. The 77-residue stretch at Leu-598–Leu-674 folds into the BRCT domain.

It belongs to the NAD-dependent DNA ligase family. LigA subfamily. Mg(2+) is required as a cofactor. Mn(2+) serves as cofactor.

It carries out the reaction NAD(+) + (deoxyribonucleotide)n-3'-hydroxyl + 5'-phospho-(deoxyribonucleotide)m = (deoxyribonucleotide)n+m + AMP + beta-nicotinamide D-nucleotide.. Functionally, DNA ligase that catalyzes the formation of phosphodiester linkages between 5'-phosphoryl and 3'-hydroxyl groups in double-stranded DNA using NAD as a coenzyme and as the energy source for the reaction. It is essential for DNA replication and repair of damaged DNA. In Chlorobaculum tepidum (strain ATCC 49652 / DSM 12025 / NBRC 103806 / TLS) (Chlorobium tepidum), this protein is DNA ligase.